A 346-amino-acid chain; its full sequence is F(420)H(2) dehydrogenase subunit H (346 aa).

The next 8 membrane-spanning stretches (helical) occupy residues 18 to 38 (GIVGLVLIGVIFMGAMGAVWL), 91 to 111 (IFMLGSVFLMLVALPVGAVFI), 125 to 145 (ISVLYIEAVSALSIFGIFMVA), 170 to 190 (PLGITVISVAAMTGSLNIVDI), 196 to 216 (LHWNIFLQPLGCFVFFVSLMA), 257 to 277 (ILGSFLVALLFLGGWNVPGFI), 284 to 304 (GIIVPTGFLIVKVVFVLMVII), and 326 to 346 (LLPLALLNLVWAVGLGLYLGA).

Belongs to the complex I subunit 1 family. As to quaternary structure, the FPO complex is composed of at least 13 different subunits. FpoA, FpoH, FpoJ, FpoK, FpoL, FpoM and FpoN proteins constitute the membrane sector of the complex.

Its subcellular location is the cell membrane. The enzyme catalyses methanophenazine + reduced coenzyme F420-(gamma-L-Glu)(n) = dihydromethanophenazine + oxidized coenzyme F420-(gamma-L-Glu)(n) + H(+). Component of the F(420)H(2) dehydrogenase (FPO complex) which is part of the energy-conserving F(420)H(2):heterodisulfide oxidoreductase system. The membrane-bound electron transfer system of the complex plays an important role in the metabolism of methylotrophic methanogens when the organisms grow on methanol or methylamines. Catalyzes the oxidation of methanophenazine to dihydromethanophenazine. It shuttles electrons from F(420)H(2), via FAD and iron-sulfur (Fe-S) centers, to methanophenazine (an electron carrier in the membrane). It couples the redox reaction to proton translocation (for every two electrons transferred, two hydrogen ions are translocated across the cytoplasmic membrane), and thus conserves the redox energy in a proton gradient. This Methanosarcina barkeri (strain Fusaro / DSM 804) protein is F(420)H(2) dehydrogenase subunit H.